The following is a 498-amino-acid chain: Aspartyl/glutamyl-tRNA(Asn/Gln) amidotransferase subunit B (498 aa).

It belongs to the GatB/GatE family. GatB subfamily. Heterotrimer of A, B and C subunits.

The enzyme catalyses L-glutamyl-tRNA(Gln) + L-glutamine + ATP + H2O = L-glutaminyl-tRNA(Gln) + L-glutamate + ADP + phosphate + H(+). It catalyses the reaction L-aspartyl-tRNA(Asn) + L-glutamine + ATP + H2O = L-asparaginyl-tRNA(Asn) + L-glutamate + ADP + phosphate + 2 H(+). Allows the formation of correctly charged Asn-tRNA(Asn) or Gln-tRNA(Gln) through the transamidation of misacylated Asp-tRNA(Asn) or Glu-tRNA(Gln) in organisms which lack either or both of asparaginyl-tRNA or glutaminyl-tRNA synthetases. The reaction takes place in the presence of glutamine and ATP through an activated phospho-Asp-tRNA(Asn) or phospho-Glu-tRNA(Gln). The chain is Aspartyl/glutamyl-tRNA(Asn/Gln) amidotransferase subunit B from Caulobacter vibrioides (strain ATCC 19089 / CIP 103742 / CB 15) (Caulobacter crescentus).